The sequence spans 433 residues: Glutamate-1-semialdehyde 2,1-aminomutase (433 aa).

Lysine 271 bears the N6-(pyridoxal phosphate)lysine mark.

Belongs to the class-III pyridoxal-phosphate-dependent aminotransferase family. HemL subfamily. In terms of assembly, homodimer. Requires pyridoxal 5'-phosphate as cofactor.

It localises to the cytoplasm. It carries out the reaction (S)-4-amino-5-oxopentanoate = 5-aminolevulinate. It participates in porphyrin-containing compound metabolism; protoporphyrin-IX biosynthesis; 5-aminolevulinate from L-glutamyl-tRNA(Glu): step 2/2. Its pathway is porphyrin-containing compound metabolism; chlorophyll biosynthesis. This is Glutamate-1-semialdehyde 2,1-aminomutase from Prochlorococcus marinus (strain SARG / CCMP1375 / SS120).